The primary structure comprises 515 residues: 2,3-bisphosphoglycerate-independent phosphoglycerate mutase (515 aa).

Mn(2+) contacts are provided by Asp14 and Ser64. The active-site Phosphoserine intermediate is the Ser64. Substrate contacts are provided by residues His125, 155 to 156 (RD), Arg187, Arg193, 263 to 266 (RADR), and Lys337. Positions 404, 408, 445, 446, and 464 each coordinate Mn(2+).

It belongs to the BPG-independent phosphoglycerate mutase family. As to quaternary structure, monomer. Mn(2+) is required as a cofactor.

It carries out the reaction (2R)-2-phosphoglycerate = (2R)-3-phosphoglycerate. It functions in the pathway carbohydrate degradation; glycolysis; pyruvate from D-glyceraldehyde 3-phosphate: step 3/5. Catalyzes the interconversion of 2-phosphoglycerate and 3-phosphoglycerate. The sequence is that of 2,3-bisphosphoglycerate-independent phosphoglycerate mutase from Pseudomonas aeruginosa (strain ATCC 15692 / DSM 22644 / CIP 104116 / JCM 14847 / LMG 12228 / 1C / PRS 101 / PAO1).